The sequence spans 422 residues: Probable sucrose-phosphatase 2 (422 aa).

It belongs to the sucrose phosphatase family. Homodimer. The cofactor is Mg(2+).

It carries out the reaction sucrose 6(F)-phosphate + H2O = sucrose + phosphate. The protein operates within glycan biosynthesis; sucrose biosynthesis; sucrose from D-fructose 6-phosphate and UDP-alpha-D-glucose: step 2/2. Its function is as follows. Catalyzes the final step of sucrose synthesis. In Arabidopsis thaliana (Mouse-ear cress), this protein is Probable sucrose-phosphatase 2 (SPP2).